The primary structure comprises 506 residues: UDP-N-acetylglucosamine--peptide N-acetylglucosaminyltransferase GtfA subunit (506 aa).

Residues 1 to 78 (MTVYNINLGI…FTDIKIAPTT (78 aa)) are N-terminus R-fold-1. A UDP-binding site is contributed by 16–19 (GVEY). Residues 79-195 (VTLDQVLAQV…LYRFPDRIFY (117 aa)) form an extended beta-sheet domain region. Residues 196–306 (SKAELVRYFL…QPQIATIPVG (111 aa)) are C-terminus R-fold-1. His-242 lines the N-acetyl-D-glucosamine pocket. The tract at residues 307–506 (SLDQLTYPKE…LKEVRDDSAL (200 aa)) is R-fold-2. UDP is bound by residues Arg-328, Tyr-357, and 383 to 385 (GHA). 405–407 (GFG) is an N-acetyl-D-glucosamine binding site. Residue Thr-409 participates in UDP binding.

This sequence belongs to the glycosyltransferase group 1 family. Glycosyltransferase 4 subfamily. As to quaternary structure, forms a heterotetramer with 2 subunits each of GtfA and GtfB. Part of the accessory SecA2/SecY2 protein translocation apparatus required to export cell wall protein GspB.

The protein resides in the cytoplasm. It is found in the cell membrane. It carries out the reaction L-seryl-[protein] + UDP-N-acetyl-alpha-D-glucosamine = 3-O-[N-acetyl-alpha-D-glucosaminyl]-L-seryl-[protein] + UDP + H(+). It participates in protein modification; protein glycosylation. In terms of biological role, required for polymorphic O-glycosylation of GspB, a serine-rich repeat cell wall protein encoded upstream in the same operon. Catalyzes the first step in glycosylation by transferring N-acetylglucosamine from UDP-GlcNAc to serine residues in GspB. Part of the accessory SecA2/SecY2 system specifically required to export GspB. Upon coexpression in E.coli with GtfB glycosylates GspB constructs. Glycosylation probably occurs intracellularly. Requires GtfB for glycosylation activity, it has no activity alone. Does not use UDP-glucose as substrate. Has a fast, probably processive glycosylation phase followed by a slower, non-processive phase. The enzyme probably modifies its tertiary conformation by opening and closing its intersubunit interfaces to accomodate the increasingly glycosylated substrate; protein substrate recognition is provided by GtfB. The sequence is that of UDP-N-acetylglucosamine--peptide N-acetylglucosaminyltransferase GtfA subunit from Streptococcus gordonii.